The sequence spans 250 residues: Nuclear transcription factor Y subunit C-4 (250 aa).

The segment at 219 to 250 is disordered; that stretch reads GIAYGGQQGHPGYLWQDPQEQQEEPPAEQQSD. The segment covering 238–250 has biased composition (acidic residues); sequence EQQEEPPAEQQSD.

The protein belongs to the NFYC/HAP5 subunit family. In terms of assembly, heterotrimeric transcription factor composed of three components, NF-YA, NF-YB and NF-YC. NF-YB and NF-YC must interact and dimerize for NF-YA association and DNA binding. Interacts with NFYB2. Interacts with NFYB8, NFYB10 and HD5/NFYB11.

The protein resides in the nucleus. Its subcellular location is the cytoplasm. Functionally, probable transcription factor involved in the regulation of flowering time under long day (LD) conditions. Functions as a repressor of flowering, independently of HD1 and GHD7. Controls flowering time by negatively regulating the expression of EHD1 and HD3A. Component of the NF-Y/HAP transcription factor complex. In Oryza sativa subsp. japonica (Rice), this protein is Nuclear transcription factor Y subunit C-4.